A 359-amino-acid polypeptide reads, in one-letter code: Archaemetzincin-2 (359 aa).

Histidine 254 provides a ligand contact to Zn(2+). Glutamate 255 serves as the catalytic Proton acceptor. Zn(2+)-binding residues include histidine 258, histidine 264, cysteine 265, cysteine 270, cysteine 289, and cysteine 292.

This sequence belongs to the peptidase M54 family. Zn(2+) serves as cofactor.

Probable zinc metalloprotease. The sequence is that of Archaemetzincin-2 (Amz2) from Rattus norvegicus (Rat).